A 96-amino-acid polypeptide reads, in one-letter code: Co-chaperonin GroES 1 (96 aa).

It belongs to the GroES chaperonin family. In terms of assembly, heptamer of 7 subunits arranged in a ring. Interacts with the chaperonin GroEL.

It is found in the cytoplasm. Its function is as follows. Together with the chaperonin GroEL, plays an essential role in assisting protein folding. The GroEL-GroES system forms a nano-cage that allows encapsulation of the non-native substrate proteins and provides a physical environment optimized to promote and accelerate protein folding. GroES binds to the apical surface of the GroEL ring, thereby capping the opening of the GroEL channel. In Vibrio cholerae serotype O1 (strain ATCC 39315 / El Tor Inaba N16961), this protein is Co-chaperonin GroES 1.